The following is a 273-amino-acid chain: MKRSVPDLMNASEPLVMVTAYDYPGARHAEAAGVDLILVGDSLGNVVLGYDSTAPVTLDDMIHHARAVRRGAPNTFLVVDLPFGTYHTGVTDAMRNAVRVIQQTGADAVKLEGATPEVLDVVGVLARNGIPVMGHVGLMPQTATAQGGLKVQGRDEASARRTLEGALALEAAGAFSVVLEAIPARLARLITERLHVPTIGIGAGVHCRGQVLVYHDLLGLYEGDEKKLAKRYAELGKEAREAIAAYAREVRAREFPTKDQSFVMKDDVLGKLY.

Mg(2+)-binding residues include Asp41 and Asp80. 3-methyl-2-oxobutanoate contacts are provided by residues 41-42, Asp80, and Lys110; that span reads DS. Glu112 contacts Mg(2+). Glu180 acts as the Proton acceptor in catalysis.

The protein belongs to the PanB family. In terms of assembly, homodecamer; pentamer of dimers. It depends on Mg(2+) as a cofactor.

The protein resides in the cytoplasm. The enzyme catalyses 3-methyl-2-oxobutanoate + (6R)-5,10-methylene-5,6,7,8-tetrahydrofolate + H2O = 2-dehydropantoate + (6S)-5,6,7,8-tetrahydrofolate. It participates in cofactor biosynthesis; (R)-pantothenate biosynthesis; (R)-pantoate from 3-methyl-2-oxobutanoate: step 1/2. In terms of biological role, catalyzes the reversible reaction in which hydroxymethyl group from 5,10-methylenetetrahydrofolate is transferred onto alpha-ketoisovalerate to form ketopantoate. In Deinococcus geothermalis (strain DSM 11300 / CIP 105573 / AG-3a), this protein is 3-methyl-2-oxobutanoate hydroxymethyltransferase.